An 833-amino-acid chain; its full sequence is Leucine--tRNA ligase (833 aa).

A 'HIGH' region motif is present at residues 41–52 (PYPSGAGLHVGH). The short motif at 610–614 (KMSKS) is the 'KMSKS' region element. K613 provides a ligand contact to ATP.

It belongs to the class-I aminoacyl-tRNA synthetase family.

Its subcellular location is the cytoplasm. It carries out the reaction tRNA(Leu) + L-leucine + ATP = L-leucyl-tRNA(Leu) + AMP + diphosphate. This is Leucine--tRNA ligase from Streptococcus agalactiae serotype III (strain NEM316).